The sequence spans 361 residues: AP2/ERF and B3 domain-containing transcription repressor TEM1 (361 aa).

A disordered region spans residues 1-73 (MEYSCVDDSS…SRKLPSSKYK (73 aa)). Positions 9-27 (SSTTSESLSISTTPKPTTT) are enriched in low complexity. Residues 71-126 (KYKGVVPQPNGRWGAQIYEKHQRVWLGTFNEEEEAASSYDIAVRRFRGRDAVTNFK) constitute a DNA-binding region (AP2/ERF). The segment at residues 195–306 (FEKTVTPSDV…QLYIHWKVRS (112 aa)) is a DNA-binding region (TF-B3).

This sequence belongs to the AP2/ERF transcription factor family. RAV subfamily. In terms of assembly, interacts with FT. Expressed in leaves.

The protein resides in the nucleus. In terms of biological role, transcriptional repressor of flowering time on long day plants. Acts directly on FT expression by binding 5'-CAACA-3' and 5'-CACCTG-3 sequences. Functionally redundant with TEM2. The chain is AP2/ERF and B3 domain-containing transcription repressor TEM1 (TEM1) from Arabidopsis thaliana (Mouse-ear cress).